The chain runs to 411 residues: Probable G-protein coupled receptor AH9.1 (411 aa).

Residues 1–18 lie on the Cytoplasmic side of the membrane; sequence MLLFLLRRIFDCRYKYKL. Residues 19–39 form a helical membrane-spanning segment; that stretch reads FVKALVLFLTIVYNAGLVHFF. Residues 40 to 55 lie on the Extracellular side of the membrane; sequence FRTTSLDDSPEMNHVD. Residues 56–76 traverse the membrane as a helical segment; sequence YVAHVIVMPIVLSIGMINQCL. The Cytoplasmic portion of the chain corresponds to 77–87; it reads NVCTLLHIRTS. The helical transmembrane segment at 88–108 threads the bilayer; it reads IFLYLKASAIADILSIVAFIP. The Extracellular portion of the chain corresponds to 109–131; sequence FLFRHAKLIDPSWELGMFYHAHL. A helical membrane pass occupies residues 132–152; the sequence is ELPLINALISASALNIVAMTV. Residues 153-176 are Cytoplasmic-facing; the sequence is DRYVSVCHPIKFFQNNETKPSRRR. The helical transmembrane segment at 177-197 threads the bilayer; sequence TMLIIVMIYFIALMIYFPSVF. Over 198–229 the chain is Extracellular; the sequence is QKKLGVVTDALTNKTIYTIVRNEDVEALQVFK. Asn-210 carries an N-linked (GlcNAc...) asparagine glycan. The chain crosses the membrane as a helical span at residues 230–250; it reads FYLIVRECICRWGPVLLLVIL. At 251 to 299 the chain is on the cytoplasmic side; the sequence is NMCVVRGLRKIDKRNWFWRQPSQNSRTETLAQRQLRSPRDDRSRISVLL. A helical transmembrane segment spans residues 300–320; the sequence is FVTSATFIICNIPASVISFFV. At 321 to 333 the chain is on the extracellular side; the sequence is RRVSGSLFWQIFR. The helical transmembrane segment at 334–354 threads the bilayer; the sequence is AIANLLQVTSYLYNFYLYALC. The Cytoplasmic segment spans residues 355–411; the sequence is SSEYRHAFLRLFGCRSSLSPTSTGDSPTVRVSVHGKRCHQAVVLLGNENHENPVDEV.

This sequence belongs to the G-protein coupled receptor 1 family.

Its subcellular location is the cell membrane. Functionally, not known. Putative receptor. In Caenorhabditis elegans, this protein is Probable G-protein coupled receptor AH9.1.